We begin with the raw amino-acid sequence, 216 residues long: Probable nicotinate-nucleotide adenylyltransferase (216 aa).

Belongs to the NadD family.

It carries out the reaction nicotinate beta-D-ribonucleotide + ATP + H(+) = deamido-NAD(+) + diphosphate. The protein operates within cofactor biosynthesis; NAD(+) biosynthesis; deamido-NAD(+) from nicotinate D-ribonucleotide: step 1/1. Its function is as follows. Catalyzes the reversible adenylation of nicotinate mononucleotide (NaMN) to nicotinic acid adenine dinucleotide (NaAD). This is Probable nicotinate-nucleotide adenylyltransferase from Geobacter metallireducens (strain ATCC 53774 / DSM 7210 / GS-15).